A 368-amino-acid chain; its full sequence is Glycolate oxidase 2 (368 aa).

Residues 1-360 (MALVTNVCEY…TRGHVVTESD (360 aa)) form the FMN hydroxy acid dehydrogenase domain. FMN contacts are provided by residues 78-80 (PTA), serine 107, 128-130 (QLS), and threonine 156. Residue arginine 165 coordinates glyoxylate. Lysine 231 and serine 253 together coordinate FMN. Histidine 255 and arginine 258 together coordinate glyoxylate. The Proton acceptor role is filled by histidine 255. FMN is bound by residues 286-290 (DSGFR) and 309-310 (GR). The short motif at 366 to 368 (SRL) is the Microbody targeting signal element.

This sequence belongs to the FMN-dependent alpha-hydroxy acid dehydrogenase family. As to quaternary structure, homotetramer. Requires FMN as cofactor.

Its subcellular location is the peroxisome. The enzyme catalyses glycolate + O2 = glyoxylate + H2O2. The protein operates within photosynthesis; photorespiration; glycine from 2-phosphoglycolate: step 2/3. Its function is as follows. Catalyzes the oxidation of glycolate to glyoxylate, with a reduction of O2 to H2O2. Is a key enzyme in photorespiration in green plants. The sequence is that of Glycolate oxidase 2 (GLO2) from Oryza sativa subsp. indica (Rice).